The primary structure comprises 590 residues: Monoterepene synthase TPS1, chloropastic (590 aa).

A chloroplast-targeting transit peptide spans 1-42 (MALNTFLHFPPCSLSSFSCAVPKLPLAIFHKTMARQIRCPRA). Residues arginine 304, aspartate 341, aspartate 345, arginine 483, and aspartate 486 each contribute to the (2E)-geranyl diphosphate site. Positions 341 and 345 each coordinate Mg(2+). The short motif at 341 to 345 (DDMYD) is the DDXXD motif element. 3 residues coordinate Mg(2+): aspartate 486, threonine 490, and glutamate 494.

The protein belongs to the terpene synthase family. Tpsb subfamily. Monomer. Mg(2+) serves as cofactor.

It is found in the plastid. The protein localises to the chloroplast. It catalyses the reaction (2E)-geranyl diphosphate = beta-thujene + diphosphate. The enzyme catalyses (2E)-geranyl diphosphate = sabinene + diphosphate. It carries out the reaction (2E)-geranyl diphosphate = beta-pinene + diphosphate. The catalysed reaction is (2E)-geranyl diphosphate = alpha-terpinene + diphosphate. It participates in secondary metabolite biosynthesis; terpenoid biosynthesis. In terms of biological role, monoterpene synthase involved in the biosynthesis of volatile organic compounds. Mediates the conversion of (2E)-geranyl diphosphate (GPP) into beta-thujene, sabinene, beta-pinene and alpha-terpinene. Does not use (2E,6E)-farnesyl diphosphate (FPP) as substrate. The protein is Monoterepene synthase TPS1, chloropastic of Cananga odorata (Ylang-ylang tree).